The primary structure comprises 189 residues: Elongation factor P (189 aa).

Belongs to the elongation factor P family.

The protein localises to the cytoplasm. Its pathway is protein biosynthesis; polypeptide chain elongation. Involved in peptide bond synthesis. Stimulates efficient translation and peptide-bond synthesis on native or reconstituted 70S ribosomes in vitro. Probably functions indirectly by altering the affinity of the ribosome for aminoacyl-tRNA, thus increasing their reactivity as acceptors for peptidyl transferase. This chain is Elongation factor P, found in Ehrlichia canis (strain Jake).